A 563-amino-acid chain; its full sequence is Protein NOXP20 (563 aa).

Residues 1–84 form a disordered region; sequence MSDDAGDTLA…ANALEPPLNG (84 aa). The segment covering 56-68 has biased composition (low complexity); sequence AAVQGAGAAAIGP. Ser120 is subject to Phosphoserine. A disordered region spans residues 165-206; the sequence is VNSGSSEGAQPNTENGVPEITDAATDQGPAESPPTSPSSASR. Residues 166 to 179 are compositionally biased toward polar residues; the sequence is NSGSSEGAQPNTEN. Phosphothreonine occurs at positions 185 and 189. Ser196 is modified (phosphoserine). The residue at position 199 (Thr199) is a Phosphothreonine. A phosphoserine mark is found at Ser202 and Ser261. The stretch at 343 to 367 forms a coiled coil; that stretch reads AAKELENEENQEEQGLEEKGEEFAR. Residues 411–436 are disordered; sequence SEEETKKEEKEEKSQDPQEDKKEEKK.

This sequence belongs to the FAM114 family.

It is found in the cytoplasm. May play a role in neuronal cell development. This is Protein NOXP20 (FAM114A1) from Homo sapiens (Human).